The following is a 307-amino-acid chain: Potassium channel subfamily K member 7 (307 aa).

Residues 1-10 (MGSLKPWARY) are Cytoplasmic-facing. A helical membrane pass occupies residues 11-31 (LLLLMAHLLAMGLGAVVLQAL). N-linked (GlcNAc...) asparagine glycosylation is present at Asn-83. An intramembrane region (pore-forming) is located at residues 92 to 118 (LPSALLFTASILTTTGYGHMAPLSSGG). The chain crosses the membrane as a helical span at residues 120–140 (AFCVVYAALGLPASLALVAAL). The Cytoplasmic portion of the chain corresponds to 141–172 (RHCLLPVFSRPGDWVAIRWQLAPAQAALLQAA). Residues 173–193 (GLGLLVACVFMLLPALVLWGV) traverse the membrane as a helical segment. The segment at residues 199–227 (LLEAIYFCFGSLSTIGLGDLLPAHGRGLH) is an intramembrane region (pore-forming). Residues 233–253 (LGQFALLGYLLLGLLAMLLAV) traverse the membrane as a helical segment. Over 254-307 (ETFSELPQVRAMVKFFGPSGSRTDEDQDGILGQDELALSTVLPDAPVLGPTTPA) the chain is Cytoplasmic.

It belongs to the two pore domain potassium channel (TC 1.A.1.8) family. Homodimer. In terms of tissue distribution, detected in embryo, eye, lung and liver. Weakly expressed in colon, testis, atria, kidney, intestine, bladder, uterus, ovary, salivary gland, thymus and brain stem. Not detected in brain, cerebellum, spinal cord, heart, ventricle, skeletal muscle, liver, placenta and pancreas. In the eye, highly expressed in the retinal ganglion cell layer and inner nuclear layer.

The protein localises to the membrane. Functionally, probable potassium channel subunit. No channel activity observed in vitro as protein remains in the endoplasmic reticulum. May need to associate with an as yet unknown partner in order to reach the plasma membrane. The sequence is that of Potassium channel subfamily K member 7 (Kcnk7) from Mus musculus (Mouse).